The following is a 260-amino-acid chain: Triosephosphate isomerase (260 aa).

11–13 (NWK) is a substrate binding site. The active-site Electrophile is H103. E175 acts as the Proton acceptor in catalysis. Substrate is bound by residues G181, S220, and 241-242 (GG).

Belongs to the triosephosphate isomerase family. As to quaternary structure, homodimer.

The protein localises to the cytoplasm. The catalysed reaction is D-glyceraldehyde 3-phosphate = dihydroxyacetone phosphate. Its pathway is carbohydrate biosynthesis; gluconeogenesis. It functions in the pathway carbohydrate degradation; glycolysis; D-glyceraldehyde 3-phosphate from glycerone phosphate: step 1/1. Involved in the gluconeogenesis. Catalyzes stereospecifically the conversion of dihydroxyacetone phosphate (DHAP) to D-glyceraldehyde-3-phosphate (G3P). This Shewanella denitrificans (strain OS217 / ATCC BAA-1090 / DSM 15013) protein is Triosephosphate isomerase.